The chain runs to 387 residues: 3-ketoacyl-CoA thiolase (387 aa).

C91 acts as the Acyl-thioester intermediate in catalysis. Catalysis depends on proton acceptor residues H343 and C373.

It belongs to the thiolase-like superfamily. Thiolase family. As to quaternary structure, heterotetramer of two alpha chains (FadB) and two beta chains (FadA).

It localises to the cytoplasm. It carries out the reaction an acyl-CoA + acetyl-CoA = a 3-oxoacyl-CoA + CoA. It functions in the pathway lipid metabolism; fatty acid beta-oxidation. In terms of biological role, catalyzes the final step of fatty acid oxidation in which acetyl-CoA is released and the CoA ester of a fatty acid two carbons shorter is formed. The polypeptide is 3-ketoacyl-CoA thiolase (Escherichia coli O6:K15:H31 (strain 536 / UPEC)).